The following is a 284-amino-acid chain: Ribosomal RNA small subunit methyltransferase A (284 aa).

H23, L25, G50, E71, D92, and N121 together coordinate S-adenosyl-L-methionine.

It belongs to the class I-like SAM-binding methyltransferase superfamily. rRNA adenine N(6)-methyltransferase family. RsmA subfamily.

Its subcellular location is the cytoplasm. It carries out the reaction adenosine(1518)/adenosine(1519) in 16S rRNA + 4 S-adenosyl-L-methionine = N(6)-dimethyladenosine(1518)/N(6)-dimethyladenosine(1519) in 16S rRNA + 4 S-adenosyl-L-homocysteine + 4 H(+). Specifically dimethylates two adjacent adenosines (A1518 and A1519) in the loop of a conserved hairpin near the 3'-end of 16S rRNA in the 30S particle. May play a critical role in biogenesis of 30S subunits. The protein is Ribosomal RNA small subunit methyltransferase A of Verminephrobacter eiseniae (strain EF01-2).